A 206-amino-acid chain; its full sequence is Ribonuclease HII (206 aa).

Residues 14–206 enclose the RNase H type-2 domain; the sequence is ALVCGIDEAG…FRLRQLGEKP (193 aa). D20, E21, and D117 together coordinate a divalent metal cation.

It belongs to the RNase HII family. Requires Mn(2+) as cofactor. It depends on Mg(2+) as a cofactor.

The protein resides in the cytoplasm. The catalysed reaction is Endonucleolytic cleavage to 5'-phosphomonoester.. Functionally, endonuclease that specifically degrades the RNA of RNA-DNA hybrids. The chain is Ribonuclease HII from Pelodictyon phaeoclathratiforme (strain DSM 5477 / BU-1).